Reading from the N-terminus, the 687-residue chain is Polyphosphate kinase (687 aa).

Residue asparagine 45 participates in ATP binding. Arginine 373 and arginine 403 together coordinate Mg(2+). Residue histidine 433 is the Phosphohistidine intermediate of the active site. The ATP site is built by tyrosine 466, arginine 562, and histidine 590. In terms of domain architecture, PLD phosphodiesterase spans 585–615; the sequence is DRFLEHDRVYVFENKGDKLVYLSSADWMTRN.

Belongs to the polyphosphate kinase 1 (PPK1) family. It depends on Mg(2+) as a cofactor. An intermediate of this reaction is the autophosphorylated ppk in which a phosphate is covalently linked to a histidine residue through a N-P bond.

The catalysed reaction is [phosphate](n) + ATP = [phosphate](n+1) + ADP. Its function is as follows. Catalyzes the reversible transfer of the terminal phosphate of ATP to form a long-chain polyphosphate (polyP). The chain is Polyphosphate kinase from Yersinia pestis.